A 525-amino-acid polypeptide reads, in one-letter code: MFEVTVSKRLLKSGIIVSAMTLISRVLGLVRDVVVANLMGAGASADVFFFANRIPNFLRRLFAEGAFSQAFVPVLTEYHASGDINKTRDLIARASGTLGVLVTIVTLIGVLGSGAVTALFGAGWFLDWLNGGPAAGKFELASLLLKITFPYLWFITFVALSGAILNTLGKFAVSSFTPVFLNVMMILCAWYLSPNLEQPEVGLAIGVFLGGLVQFLFQLPFLIKAGVLVRPKWGWKDPGVVKIRTLMIPALFGVSVSQINLLFDSFVASFLQTGSISWLYYSDRLLEFPLGLFGIAIATVILPALSRKHVDAHSDGFAHTMDWGIRMVTFLGIPAMLGLMVLAKPMLMVLFMRGEFTPSDVEQASYSLLAYSSGLLSFMLIKVLAPGYYSRQDTKTPVRYGIIAMVSNIVLNAIFAWFYGYVGLAVATSMSAFLNMALLYRGLHLQGVYHLTRKTVWFVARLAMAGAVMTGALLWQLDTMATWLSWGISQRALTLTGLIGLGVASYLAILLLLGVRLKDLKAATE.

14 consecutive transmembrane segments (helical) span residues L10–V30, D32–N52, V100–F120, L140–L160, F171–Y191, L203–I223, M247–V267, L285–L305, F330–L350, L368–Y388, I402–V422, G423–L443, T455–W475, and L495–V515.

The protein belongs to the MurJ/MviN family.

The protein resides in the cell inner membrane. It participates in cell wall biogenesis; peptidoglycan biosynthesis. In terms of biological role, involved in peptidoglycan biosynthesis. Transports lipid-linked peptidoglycan precursors from the inner to the outer leaflet of the cytoplasmic membrane. The polypeptide is Probable lipid II flippase MurJ (Vibrio cholerae serotype O1 (strain ATCC 39315 / El Tor Inaba N16961)).